The chain runs to 71 residues: Prokaryotic ubiquitin-like protein Pup (71 aa).

The span at 1 to 18 (MATRDSGGQSQTGRSQQG) shows a compositional bias: low complexity. A disordered region spans residues 1-42 (MATRDSGGQSQTGRSQQGEEIEDVTTEASPEVAERHAEITED). The ARC ATPase binding stretch occupies residues 27-65 (EASPEVAERHAEITEDVDDLLDEIDSVLEENAEEFVRGY). Residues 31–60 (EVAERHAEITEDVDDLLDEIDSVLEENAEE) are a coiled coil. Glu71 participates in a covalent cross-link: Isoglutamyl lysine isopeptide (Glu-Lys) (interchain with K-? in acceptor proteins).

This sequence belongs to the prokaryotic ubiquitin-like protein family. Strongly interacts with the proteasome-associated ATPase ARC through a hydrophobic interface; the interacting region of Pup lies in its C-terminal half. There is one Pup binding site per ARC hexamer ring.

The protein operates within protein degradation; proteasomal Pup-dependent pathway. Its function is as follows. Protein modifier that is covalently attached to lysine residues of substrate proteins, thereby targeting them for proteasomal degradation. The tagging system is termed pupylation. This chain is Prokaryotic ubiquitin-like protein Pup, found in Salinispora arenicola (strain CNS-205).